A 274-amino-acid chain; its full sequence is NADPH-dependent 7-cyano-7-deazaguanine reductase (274 aa).

80–82 (VES) contributes to the substrate binding site. 82 to 83 (SK) is an NADPH binding site. The active-site Thioimide intermediate is Cys181. The active-site Proton donor is the Asp188. Residue 220 to 221 (HE) participates in substrate binding. Residue 249–250 (RG) coordinates NADPH.

It belongs to the GTP cyclohydrolase I family. QueF type 2 subfamily. In terms of assembly, homodimer.

The protein resides in the cytoplasm. The catalysed reaction is 7-aminomethyl-7-carbaguanine + 2 NADP(+) = 7-cyano-7-deazaguanine + 2 NADPH + 3 H(+). The protein operates within tRNA modification; tRNA-queuosine biosynthesis. Catalyzes the NADPH-dependent reduction of 7-cyano-7-deazaguanine (preQ0) to 7-aminomethyl-7-deazaguanine (preQ1). In Burkholderia pseudomallei (strain 1710b), this protein is NADPH-dependent 7-cyano-7-deazaguanine reductase.